Consider the following 413-residue polypeptide: tRNA (guanine-N(7)-)-methyltransferase non-catalytic subunit WDR4 (413 aa).

At alanine 2 the chain carries N-acetylalanine. 5 WD repeats span residues 61-100 (TGSDSILASTFSKSGRYFALTDDSKRLILFRTKPWQCLSV), 102-141 (MVVRRCTALTFTASEDRVLVADKSGDVYSFSVLEPDGCGR), 145-185 (GHLS…IESF), 188-228 (GHTE…QLQC), and 289-329 (TFPH…WQAA). The interval 380–413 (RLQQQLKKKRQRSPFPGSPEQTKKACPGQSALSC) is disordered. Serine 392 and serine 412 each carry phosphoserine.

This sequence belongs to the WD repeat TRM82 family. As to quaternary structure, non-catalytic component of the METTL1-WDR4 complex, composed of METTL1 and WDR4. Interacts with FEN1; the interaction is direct.

The protein resides in the nucleus. The protein localises to the chromosome. It functions in the pathway tRNA modification; N(7)-methylguanine-tRNA biosynthesis. Non-catalytic component of the METTL1-WDR4 methyltransferase complex required for the formation of N(7)-methylguanine in a subset of RNA species, such as tRNAs, mRNAs and microRNAs (miRNAs). In the METTL1-WDR4 methyltransferase complex, WDR4 acts as a scaffold for tRNA-binding. Required for the formation of N(7)-methylguanine at position 46 (m7G46) in a large subset of tRNAs that contain the 5'-RAGGU-3' motif within the variable loop. M7G46 interacts with C13-G22 in the D-loop to stabilize tRNA tertiary structure and protect tRNAs from decay. Also required for the formation of N(7)-methylguanine at internal sites in a subset of mRNAs. Also required for methylation of a specific subset of miRNAs, such as let-7. Acts as a regulator of embryonic stem cell self-renewal and differentiation. Independently of METTL1, also plays a role in genome stability: localizes at the DNA replication site and regulates endonucleolytic activities of FEN1. The chain is tRNA (guanine-N(7)-)-methyltransferase non-catalytic subunit WDR4 from Mus musculus (Mouse).